We begin with the raw amino-acid sequence, 423 residues long: Histidine--tRNA ligase (423 aa).

It belongs to the class-II aminoacyl-tRNA synthetase family. Homodimer.

The protein localises to the cytoplasm. It catalyses the reaction tRNA(His) + L-histidine + ATP = L-histidyl-tRNA(His) + AMP + diphosphate + H(+). This chain is Histidine--tRNA ligase, found in Haemophilus influenzae (strain 86-028NP).